The following is a 160-amino-acid chain: Cytochrome b6-f complex subunit 4 (160 aa).

3 consecutive transmembrane segments (helical) span residues 36 to 56 (LLYM…GLAV), 95 to 115 (LLGV…PFIE), and 131 to 151 (TVFL…TLPI).

The protein belongs to the cytochrome b family. PetD subfamily. As to quaternary structure, the 4 large subunits of the cytochrome b6-f complex are cytochrome b6, subunit IV (17 kDa polypeptide, petD), cytochrome f and the Rieske protein, while the 4 small subunits are petG, petL, petM and petN. The complex functions as a dimer.

The protein localises to the plastid. It localises to the chloroplast thylakoid membrane. Functionally, component of the cytochrome b6-f complex, which mediates electron transfer between photosystem II (PSII) and photosystem I (PSI), cyclic electron flow around PSI, and state transitions. The sequence is that of Cytochrome b6-f complex subunit 4 from Coleochaete orbicularis (Charophycean green alga).